The chain runs to 413 residues: Argininosuccinate synthase (413 aa).

22–30 (AYSGGLDTS) is an ATP binding site. Residues tyrosine 100 and serine 105 each coordinate L-citrulline. Glycine 130 is a binding site for ATP. Threonine 132, asparagine 136, and aspartate 137 together coordinate L-aspartate. Asparagine 136 serves as a coordination point for L-citrulline. L-citrulline contacts are provided by arginine 140, serine 189, serine 198, glutamate 274, and tyrosine 286.

It belongs to the argininosuccinate synthase family. Type 1 subfamily. Homotetramer.

The protein localises to the cytoplasm. It carries out the reaction L-citrulline + L-aspartate + ATP = 2-(N(omega)-L-arginino)succinate + AMP + diphosphate + H(+). Its pathway is amino-acid biosynthesis; L-arginine biosynthesis; L-arginine from L-ornithine and carbamoyl phosphate: step 2/3. This is Argininosuccinate synthase from Endomicrobium trichonymphae.